We begin with the raw amino-acid sequence, 133 residues long: ATP synthase epsilon chain, chloroplastic (133 aa).

This sequence belongs to the ATPase epsilon chain family. As to quaternary structure, F-type ATPases have 2 components, CF(1) - the catalytic core - and CF(0) - the membrane proton channel. CF(1) has five subunits: alpha(3), beta(3), gamma(1), delta(1), epsilon(1). CF(0) has three main subunits: a, b and c.

The protein localises to the plastid. It is found in the chloroplast thylakoid membrane. Its function is as follows. Produces ATP from ADP in the presence of a proton gradient across the membrane. This Chara vulgaris (Common stonewort) protein is ATP synthase epsilon chain, chloroplastic.